The following is a 438-amino-acid chain: Enolase (438 aa).

Substrate contacts are provided by His-159 and Glu-168. Residue Glu-211 is the Proton donor of the active site. 3 residues coordinate Mg(2+): Asp-246, Glu-297, and Asp-322. Positions 297 and 322 each coordinate substrate. Lys-347 (proton acceptor) is an active-site residue. Substrate is bound by residues 374 to 377 (SHRS) and Lys-398.

Belongs to the enolase family. In terms of assembly, homodimer. Mg(2+) is required as a cofactor.

The protein resides in the cytoplasm. It catalyses the reaction (2R)-2-phosphoglycerate = phosphoenolpyruvate + H2O. It participates in carbohydrate degradation; glycolysis; pyruvate from D-glyceraldehyde 3-phosphate: step 4/5. The polypeptide is Enolase (emp-7) (Neurospora crassa (strain ATCC 24698 / 74-OR23-1A / CBS 708.71 / DSM 1257 / FGSC 987)).